The sequence spans 200 residues: NAD(P)H dehydrogenase (quinone) (200 aa).

The 188-residue stretch at Val-4–Val-191 folds into the Flavodoxin-like domain. FMN contacts are provided by residues Ser-10–Val-15 and Thr-79–Phe-81. Tyr-12 serves as a coordination point for NAD(+). Trp-99 contributes to the substrate binding site. Residues Ser-114–Gly-120 and His-135 contribute to the FMN site.

It belongs to the WrbA family. FMN is required as a cofactor.

The catalysed reaction is a quinone + NADH + H(+) = a quinol + NAD(+). It catalyses the reaction a quinone + NADPH + H(+) = a quinol + NADP(+). The polypeptide is NAD(P)H dehydrogenase (quinone) (Burkholderia cenocepacia (strain ATCC BAA-245 / DSM 16553 / LMG 16656 / NCTC 13227 / J2315 / CF5610) (Burkholderia cepacia (strain J2315))).